A 109-amino-acid chain; its full sequence is Nucleoid-associated protein Caul_4574 (109 aa).

Belongs to the YbaB/EbfC family. As to quaternary structure, homodimer.

The protein resides in the cytoplasm. It localises to the nucleoid. Functionally, binds to DNA and alters its conformation. May be involved in regulation of gene expression, nucleoid organization and DNA protection. The polypeptide is Nucleoid-associated protein Caul_4574 (Caulobacter sp. (strain K31)).